We begin with the raw amino-acid sequence, 362 residues long: Peptide chain release factor 1 (362 aa).

The residue at position 237 (Gln-237) is an N5-methylglutamine.

It belongs to the prokaryotic/mitochondrial release factor family. In terms of processing, methylated by PrmC. Methylation increases the termination efficiency of RF1.

The protein localises to the cytoplasm. Peptide chain release factor 1 directs the termination of translation in response to the peptide chain termination codons UAG and UAA. The polypeptide is Peptide chain release factor 1 (Vibrio atlanticus (strain LGP32) (Vibrio splendidus (strain Mel32))).